Consider the following 385-residue polypeptide: Serpin-Z10 (385 aa).

Residues Gly333–Ala357 are RCL.

It belongs to the serpin family.

Its function is as follows. Probable serine protease inhibitor. This chain is Serpin-Z10, found in Arabidopsis thaliana (Mouse-ear cress).